Consider the following 277-residue polypeptide: Ribosomal RNA small subunit methyltransferase A (277 aa).

Residues histidine 20, leucine 22, glycine 47, glutamate 71, aspartate 94, and asparagine 116 each contribute to the S-adenosyl-L-methionine site.

This sequence belongs to the class I-like SAM-binding methyltransferase superfamily. rRNA adenine N(6)-methyltransferase family. RsmA subfamily.

Its subcellular location is the cytoplasm. The catalysed reaction is adenosine(1518)/adenosine(1519) in 16S rRNA + 4 S-adenosyl-L-methionine = N(6)-dimethyladenosine(1518)/N(6)-dimethyladenosine(1519) in 16S rRNA + 4 S-adenosyl-L-homocysteine + 4 H(+). Functionally, specifically dimethylates two adjacent adenosines (A1518 and A1519) in the loop of a conserved hairpin near the 3'-end of 16S rRNA in the 30S particle. May play a critical role in biogenesis of 30S subunits. The chain is Ribosomal RNA small subunit methyltransferase A from Burkholderia sp.